The primary structure comprises 279 residues: Putative cysteine-rich repeat secretory protein 22 (279 aa).

The N-terminal stretch at 1–31 (MSSSSASKLLGSVLVFAMISVQIVFIHCVMS) is a signal peptide. Gnk2-homologous domains are found at residues 44–146 (YLHH…PINS) and 152–276 (YEYN…LYRF).

It belongs to the cysteine-rich repeat secretory protein family.

Its subcellular location is the secreted. This Arabidopsis thaliana (Mouse-ear cress) protein is Putative cysteine-rich repeat secretory protein 22 (CRRSP22).